A 615-amino-acid chain; its full sequence is Hypermethylated in cancer 2 protein (615 aa).

One can recognise a BTB domain in the interval 46–109 (CDVIIMVENS…IYTGKLLPSD (64 aa)). Residues 144-167 (KPFGSGRAGSTGMGRPPRSQRLST) form a disordered region. A phosphoserine mark is found at Ser166, Ser169, and Ser197. Disordered stretches follow at residues 182-208 (RKGA…GSNQ) and 229-421 (GCSS…SGHA). The segment at 246–250 (GLDLS) is binding to CtBP. A compositionally biased stretch (low complexity) spans 280-296 (SPPAASAPPVANSASYS). Basic and acidic residues predominate over residues 336–356 (KKEWGKKEPVAGSPFERREAG). Ser348 is subject to Phosphoserine. A compositionally biased stretch (low complexity) spans 379–388 (ASGAGPSGPY). Position 412 is a phosphoserine (Ser412). 5 consecutive C2H2-type zinc fingers follow at residues 442–469 (YVCI…EEEL), 505–532 (FKCS…LTRP), 533–560 (FPCN…GLKP), 561–588 (FACD…GEKP), and 589–615 (YECQ…TSPS).

It belongs to the krueppel C2H2-type zinc-finger protein family. Hic subfamily. As to quaternary structure, self-associates. Interacts with HIC1. As to expression, highest levels in cerebellum.

It is found in the nucleus. In terms of biological role, transcriptional repressor. This chain is Hypermethylated in cancer 2 protein (HIC2), found in Homo sapiens (Human).